A 251-amino-acid chain; its full sequence is MPKRDAPWRSMAGTSKVSRNANYSPRSGIGPRINKAAEWVNRPMYRKPRIYRTLRTPDVPRGCEGPCKVQSFEQRHDILHTGKVMCISDVTRGNGITHRVGKRFCVKSVYILGKIWMDENIKLKNHTNSVMFWLVRDRRPYGTPMDFGQVFNMFDNEPSTATVKNDLRDRYQVMHRFYGKVTGGQYASNEHAIVRRFWKVNNHVVYNHQEAGKYENHTENALLLYMACTHASNPVYATLKIRIYFYDSILN.

The tract at residues methionine 1–isoleucine 29 is disordered. Positions lysine 3–asparagine 20 match the Bipartite nuclear localization signal motif. Over residues alanine 12 to proline 25 the composition is skewed to polar residues. The short motif at lysine 35–arginine 49 is the Nuclear localization signal element. A zinc finger lies at cysteine 63–histidine 80. The Nuclear export signal motif lies at isoleucine 96 to methionine 117. Residues arginine 195–arginine 242 carry the Bipartite nuclear localization signal motif.

Belongs to the geminiviridae capsid protein family. In terms of assembly, homomultimer. Binds to single-stranded and double-stranded viral DNA. Interacts (via nuclear localization signals) with host importin alpha-1a.

It localises to the virion. It is found in the host nucleus. Encapsidates the viral DNA into characteristic twinned ('geminate') particles. Binds the genomic viral ssDNA and shuttles it into and out of the cell nucleus. The CP of bipartite geminiviruses is not required for cell-to-cell or systemic movement. The polypeptide is Capsid protein (Solanum tuberosum (Potato)).